A 177-amino-acid chain; its full sequence is Ribosome maturation factor RimM (177 aa).

In terms of domain architecture, PRC barrel spans 98 to 171 (GETIFLSEIK…AVVMDLPEGL (74 aa)).

The protein belongs to the RimM family. Binds ribosomal protein uS19.

It is found in the cytoplasm. In terms of biological role, an accessory protein needed during the final step in the assembly of 30S ribosomal subunit, possibly for assembly of the head region. Essential for efficient processing of 16S rRNA. May be needed both before and after RbfA during the maturation of 16S rRNA. It has affinity for free ribosomal 30S subunits but not for 70S ribosomes. This chain is Ribosome maturation factor RimM, found in Bdellovibrio bacteriovorus (strain ATCC 15356 / DSM 50701 / NCIMB 9529 / HD100).